The primary structure comprises 378 residues: POU domain, class 3, transcription factor 2 (378 aa).

Disordered regions lie at residues 1 to 28, 86 to 118, and 151 to 205; these read MATTASNHYNILTSSPSIVHSEPGSMQQ, SPRDEMHNSSNLQHQSRPPHLVHQTHGNHHDSR, and LIPG…TPTS. The span at 164-181 shows a compositional bias: basic and acidic residues; the sequence is MRDAHEDHHSPHLSDHGH. The 75-residue stretch at 200 to 274 folds into the POU-specific domain; that stretch reads EDTPTSDDLE…LLNKWLEEAD (75 aa). A Phosphoserine modification is found at S279. A DNA-binding region (homeobox) is located at residues 292-351; sequence KRKKRTSIEVSVKGALESHFLKCPKPAASEITSLADSLQLEKEVVRVWFCNRRQKEKRMT. Residues 347–378 form a disordered region; the sequence is EKRMTPPGGPLPGTEDVYGDTPPHHGVQTPVQ.

The protein belongs to the POU transcription factor family. Class-3 subfamily. Predominantly expressed in the central nervous system, with strong expression in the cerebellum.

It localises to the nucleus. In terms of biological role, transcription factor that may play important roles in patterning the embryonic brain. The protein is POU domain, class 3, transcription factor 2 (pou3f2) of Danio rerio (Zebrafish).